The sequence spans 414 residues: Mu-like prophage FluMu F protein (414 aa).

To phage Mu protein F.

Functionally, involved in virion morphogenesis. The protein is Mu-like prophage FluMu F protein of Haemophilus influenzae (strain ATCC 51907 / DSM 11121 / KW20 / Rd).